The following is a 613-amino-acid chain: MNSMLNFTHKRKSVSRLLAPVALAVILAGCSSSNQQQASASNITAIATDTSANYLIKAESSDGIESIDWNILALKALIKEGQWTQADNQSKRLSRMSLSPIQMAEWQLARATLRYQQGQLQEALNTLNFQPWWPLPDNQYKRYFMLRAELLGQLGQHSKAARQRTMLDQYLPSNQKNANWQNLWQDLSSYNNSQLQSVSLKEDETVLRGWIQLSILKNTYSQRPVRLKSAVDEWLSMNPYHPAHQYLPTELEAIMSMEVAQLDNVALLLPLTGRFESQGKAVRDGFINAMLDDTSRDTDTELTVFDTEAESMTAIMAKLQANGTQFVIGPLRKEKVTAFQQSNTSQINLLALNQPEQLDVSQTQSCYFSLSPEQEAEQAAQHLFAKGHQYPLVLAPKSKFGQRMTDAFNEQWQQLTGRNADIDTFGSRKQIQQQISRIFGLNDSQARISQMNQLTGVKLESQQRSRRDTDAVYLIANKSELTLLKPFIEVAINPEVKPPKLYASSRGNPNANSDNSELRGIEFSDIPLIINPELSFMERFDSLWPNESNTSIRLHAFGMDAYKMVNELPQLRVVDNYTVQGMTGQLGIDNQCVVQREMDWAVFTSDGITPAAE.

Residues 1–29 (MNSMLNFTHKRKSVSRLLAPVALAVILAG) form the signal peptide. A lipid anchor (N-palmitoyl cysteine) is attached at Cys30. Cys30 carries S-diacylglycerol cysteine lipidation.

This sequence belongs to the LpoA family. Interacts with PBP1a.

It is found in the cell outer membrane. In terms of biological role, regulator of peptidoglycan synthesis that is essential for the function of penicillin-binding protein 1A (PBP1a). The polypeptide is Penicillin-binding protein activator LpoA (Photobacterium profundum (strain SS9)).